The following is an 89-amino-acid chain: Small ribosomal subunit protein uS15 (89 aa).

Belongs to the universal ribosomal protein uS15 family. As to quaternary structure, part of the 30S ribosomal subunit. Forms a bridge to the 50S subunit in the 70S ribosome, contacting the 23S rRNA.

Functionally, one of the primary rRNA binding proteins, it binds directly to 16S rRNA where it helps nucleate assembly of the platform of the 30S subunit by binding and bridging several RNA helices of the 16S rRNA. Forms an intersubunit bridge (bridge B4) with the 23S rRNA of the 50S subunit in the ribosome. This Nostoc punctiforme (strain ATCC 29133 / PCC 73102) protein is Small ribosomal subunit protein uS15.